A 303-amino-acid chain; its full sequence is MPLSLPVISTEVRQALDAGRPVVALESTIITHGLPRPRNLAVARDAERQLRDAGVVPATIGVVAGTPTVGLTGEQIEELAADEAAVKISTRDLPVAVARGASGGTTVAATAFLARKAGIRVFATGGLGGVHHGAATTFDESADLVTLASTPLVLVSAGAKSILDLAATLERLETLNIPVVGYRTRRFPGFYVADSGHDLEHSVDTPQEVAALVEARDALELRSALLVANPIPPERQLDPELHRRVLAEAWEEAERQGISGHDSTPFLLDHIRRATGDRSLEVNIDVYQNNVALGASIARAMAG.

The Proton donor role is filled by Glu-26. Lys-87 and Val-107 together coordinate substrate. Asp-139 provides a ligand contact to Mn(2+). Position 141-143 (141-143) interacts with substrate; the sequence is SAD. Lys-160 functions as the Nucleophile in the catalytic mechanism.

The protein belongs to the pseudouridine-5'-phosphate glycosidase family. Homotrimer. Requires Mn(2+) as cofactor.

It catalyses the reaction D-ribose 5-phosphate + uracil = psi-UMP + H2O. In terms of biological role, catalyzes the reversible cleavage of pseudouridine 5'-phosphate (PsiMP) to ribose 5-phosphate and uracil. Functions biologically in the cleavage direction, as part of a pseudouridine degradation pathway. This is Pseudouridine-5'-phosphate glycosidase from Saccharopolyspora erythraea (strain ATCC 11635 / DSM 40517 / JCM 4748 / NBRC 13426 / NCIMB 8594 / NRRL 2338).